The following is a 514-amino-acid chain: 2-isopropylmalate synthase (514 aa).

A Pyruvate carboxyltransferase domain is found at Leu5–Val268. Mn(2+) contacts are provided by Asp14, His202, His204, and Asn239. The interval Lys395–Ser514 is regulatory domain.

Belongs to the alpha-IPM synthase/homocitrate synthase family. LeuA type 1 subfamily. Homodimer. It depends on Mn(2+) as a cofactor.

It is found in the cytoplasm. The catalysed reaction is 3-methyl-2-oxobutanoate + acetyl-CoA + H2O = (2S)-2-isopropylmalate + CoA + H(+). The protein operates within amino-acid biosynthesis; L-leucine biosynthesis; L-leucine from 3-methyl-2-oxobutanoate: step 1/4. Its function is as follows. Catalyzes the condensation of the acetyl group of acetyl-CoA with 3-methyl-2-oxobutanoate (2-ketoisovalerate) to form 3-carboxy-3-hydroxy-4-methylpentanoate (2-isopropylmalate). This Burkholderia ambifaria (strain MC40-6) protein is 2-isopropylmalate synthase.